We begin with the raw amino-acid sequence, 574 residues long: MSSLAVDDAERRVGDYHPNLWDDALIQSLSTPYGASPYRDVAEKLIGEIKEMFASISIEDGDDEICYFLQRLWMIDNVERLGISRHFENEIKAAMEDVYSRHWSDKGIACGRHSVVADLNSTALAFRTLRLHGYSVCSDVFKIFQDQKGEFACSADQTEGEIKGILNLLRASLIAFPGERILQEAEIFATTYLKEALPKIQGSRLSQEIEYVLEYGWLTDLPRLETRNYIEVLAEEITPYFKKPCMAVEKLLKLAKIEFNLFHSLQQTELKHLSRWWKDSGFAQLTFTRHRHVEFYTLASCIAMEPKHSAFRLGFAKLCYLGIVLDDIYDTYGKMEELELFTAAIKRWDTSTTECLPEYMKGVYMAFYDCVNEMARQAEKTQGWDTLDYARKTWEALIDAFMEEAKWISSGYVPTFQKYLDNGKVSFGYRAATLQPILTLDIPLPLHILQEIDFPSSFNDLASSILRLRGDICGYQAERSRGEQASSISCYMKDNPGSTEEDALSHVNAMIGDKIPEFNWEFMKPSKAPISSKKYAFDILRAFYHLYKYRDGFSIAKIETKKLVMRTVLDPVPM.

3 residues coordinate Mn(2+): D326, D330, and E478. Positions 326-330 match the DDXXD motif motif; that stretch reads DDIYD.

The protein belongs to the terpene synthase family. Tpsd subfamily. Mn(2+) serves as cofactor.

Its subcellular location is the cytoplasm. It catalyses the reaction (2E,6E)-farnesyl diphosphate = (3E,6E)-alpha-farnesene + diphosphate. Its pathway is terpene metabolism; oleoresin biosynthesis. Its function is as follows. Involved in sesquiterpene (C15) biosynthesis. The major product is alpha-farnesene. This is Alpha-farnesene synthase (PT5) from Pinus taeda (Loblolly pine).